The chain runs to 1162 residues: Isoleucine--tRNA ligase (1162 aa).

The 'HIGH' region motif lies at 50–60 (PSANGMPGIHH). A 'KMSKS' region motif is present at residues 710 to 714 (KMSKR). An ATP-binding site is contributed by Lys-713.

It belongs to the class-I aminoacyl-tRNA synthetase family. IleS type 2 subfamily. As to quaternary structure, monomer. Zn(2+) is required as a cofactor.

The protein resides in the cytoplasm. It carries out the reaction tRNA(Ile) + L-isoleucine + ATP = L-isoleucyl-tRNA(Ile) + AMP + diphosphate. Catalyzes the attachment of isoleucine to tRNA(Ile). As IleRS can inadvertently accommodate and process structurally similar amino acids such as valine, to avoid such errors it has two additional distinct tRNA(Ile)-dependent editing activities. One activity is designated as 'pretransfer' editing and involves the hydrolysis of activated Val-AMP. The other activity is designated 'posttransfer' editing and involves deacylation of mischarged Val-tRNA(Ile). In Bacteroides thetaiotaomicron (strain ATCC 29148 / DSM 2079 / JCM 5827 / CCUG 10774 / NCTC 10582 / VPI-5482 / E50), this protein is Isoleucine--tRNA ligase.